Reading from the N-terminus, the 170-residue chain is Photosystem I assembly protein Ycf3 (170 aa).

TPR repeat units follow at residues 35-68, 72-105, and 120-153; these read AFCY…EEDP, SYII…NPRL, and GLKA…APNN.

The protein belongs to the Ycf3 family.

It localises to the plastid. The protein resides in the chloroplast thylakoid membrane. Essential for the assembly of the photosystem I (PSI) complex. May act as a chaperone-like factor to guide the assembly of the PSI subunits. In Gracilaria tenuistipitata var. liui (Red alga), this protein is Photosystem I assembly protein Ycf3.